The chain runs to 542 residues: Peptide chain release factor 3 (542 aa).

Positions 14–283 (ELRRNFAIIS…YFLEYALKPG (270 aa)) constitute a tr-type G domain. Residues 23 to 30 (SHPDAGKT), 91 to 95 (DTPGH), and 145 to 148 (NKLD) contribute to the GTP site.

Belongs to the TRAFAC class translation factor GTPase superfamily. Classic translation factor GTPase family. PrfC subfamily.

The protein resides in the cytoplasm. In terms of biological role, increases the formation of ribosomal termination complexes and stimulates activities of RF-1 and RF-2. It binds guanine nucleotides and has strong preference for UGA stop codons. It may interact directly with the ribosome. The stimulation of RF-1 and RF-2 is significantly reduced by GTP and GDP, but not by GMP. The chain is Peptide chain release factor 3 from Nostoc punctiforme (strain ATCC 29133 / PCC 73102).